We begin with the raw amino-acid sequence, 465 residues long: Ribulose bisphosphate carboxylase large chain (465 aa).

The residue at position 4 (lysine 4) is an N6,N6,N6-trimethyllysine. Substrate is bound by residues asparagine 113 and threonine 163. Lysine 165 (proton acceptor) is an active-site residue. Residue lysine 167 coordinates substrate. Mg(2+) is bound by residues lysine 191, aspartate 193, and glutamate 194. Lysine 191 is subject to N6-carboxylysine. Histidine 284 acts as the Proton acceptor in catalysis. Substrate-binding residues include arginine 285, histidine 317, and serine 369.

It belongs to the RuBisCO large chain family. Type I subfamily. As to quaternary structure, heterohexadecamer of 8 large chains and 8 small chains; disulfide-linked. The disulfide link is formed within the large subunit homodimers. Mg(2+) is required as a cofactor. The disulfide bond which can form in the large chain dimeric partners within the hexadecamer appears to be associated with oxidative stress and protein turnover.

Its subcellular location is the plastid. It is found in the chloroplast. It carries out the reaction 2 (2R)-3-phosphoglycerate + 2 H(+) = D-ribulose 1,5-bisphosphate + CO2 + H2O. The enzyme catalyses D-ribulose 1,5-bisphosphate + O2 = 2-phosphoglycolate + (2R)-3-phosphoglycerate + 2 H(+). RuBisCO catalyzes two reactions: the carboxylation of D-ribulose 1,5-bisphosphate, the primary event in carbon dioxide fixation, as well as the oxidative fragmentation of the pentose substrate in the photorespiration process. Both reactions occur simultaneously and in competition at the same active site. This Senega cruciata (Cross-leaved milkwort) protein is Ribulose bisphosphate carboxylase large chain.